A 302-amino-acid polypeptide reads, in one-letter code: Urease accessory protein UreD 2 (302 aa).

It belongs to the UreD family. As to quaternary structure, ureD, UreF and UreG form a complex that acts as a GTP-hydrolysis-dependent molecular chaperone, activating the urease apoprotein by helping to assemble the nickel containing metallocenter of UreC. The UreE protein probably delivers the nickel.

It localises to the cytoplasm. Required for maturation of urease via the functional incorporation of the urease nickel metallocenter. The chain is Urease accessory protein UreD 2 from Brucella ovis (strain ATCC 25840 / 63/290 / NCTC 10512).